Consider the following 110-residue polypeptide: Large ribosomal subunit protein uL22 (110 aa).

Belongs to the universal ribosomal protein uL22 family. As to quaternary structure, part of the 50S ribosomal subunit.

In terms of biological role, this protein binds specifically to 23S rRNA; its binding is stimulated by other ribosomal proteins, e.g. L4, L17, and L20. It is important during the early stages of 50S assembly. It makes multiple contacts with different domains of the 23S rRNA in the assembled 50S subunit and ribosome. The globular domain of the protein is located near the polypeptide exit tunnel on the outside of the subunit, while an extended beta-hairpin is found that lines the wall of the exit tunnel in the center of the 70S ribosome. This Mannheimia succiniciproducens (strain KCTC 0769BP / MBEL55E) protein is Large ribosomal subunit protein uL22.